Reading from the N-terminus, the 421-residue chain is Serine hydroxymethyltransferase (421 aa).

(6S)-5,6,7,8-tetrahydrofolate is bound by residues Leu-121 and 125–127 (GHL). Lys-229 is subject to N6-(pyridoxal phosphate)lysine.

This sequence belongs to the SHMT family. In terms of assembly, homodimer. The cofactor is pyridoxal 5'-phosphate.

It is found in the cytoplasm. The enzyme catalyses (6R)-5,10-methylene-5,6,7,8-tetrahydrofolate + glycine + H2O = (6S)-5,6,7,8-tetrahydrofolate + L-serine. Its pathway is one-carbon metabolism; tetrahydrofolate interconversion. The protein operates within amino-acid biosynthesis; glycine biosynthesis; glycine from L-serine: step 1/1. Its function is as follows. Catalyzes the reversible interconversion of serine and glycine with tetrahydrofolate (THF) serving as the one-carbon carrier. This reaction serves as the major source of one-carbon groups required for the biosynthesis of purines, thymidylate, methionine, and other important biomolecules. Also exhibits THF-independent aldolase activity toward beta-hydroxyamino acids, producing glycine and aldehydes, via a retro-aldol mechanism. In Haemophilus influenzae (strain PittEE), this protein is Serine hydroxymethyltransferase.